A 214-amino-acid chain; its full sequence is Tungstate uptake system ATP-binding protein TupC (214 aa).

One can recognise an ABC transporter domain in the interval 3-214 (ITVSNLKKSY…GRVGEADGFF (212 aa)). 35 to 42 (GPNGAGKT) contributes to the ATP binding site.

This sequence belongs to the ABC transporter superfamily. The complex is composed of two ATP-binding proteins (TupC), two transmembrane proteins (TupB) and a solute-binding protein (TupA).

The catalysed reaction is tungstate(in) + ATP + H2O = tungstate(out) + ADP + phosphate + H(+). Functionally, part of an ABC transporter complex involved in tungstate uptake. Probably responsible for energy coupling to the transport system. This is Tungstate uptake system ATP-binding protein TupC from Peptoclostridium acidaminophilum (Eubacterium acidaminophilum).